A 774-amino-acid chain; its full sequence is MSLLLTIAKEYKRLCQDAKAAQMMTVGTVSNYTTFKKWTTSRKEKNPSLRMRWAMSSKFPIIANKRMLEEAQIPKEHNNVALWEDTEDVSKRDHVLASASCINYWNFCGPCVNNSEVIKEVYKSRFGRLERRKEIMWKELRFTLVDRQRRRVDTQPVEQRLRTGEIKDLQMWTLFEDEAPLASKFILDNYGLVKEMRSKFANKPLNKEVVAHMLEKQFNPESRFLPVFGAIRPERMELIHALGGETWIQEANTAGISNVDQRKNDMRAVCRKVCLAANASIMNAKSKLVEYIKSTSMRIGETERKLEELIPETDDVSPEVTLCKSALGGPLGKTLSFGPMLLKKISGSGVKVKDTVYIQGVRAVQFEYWSEQEEFYGEYKSATALFSRKERSLEWITIGGGINEDRKRLLAMCMIFCRDGDYFKDAPATITMADLTTKLGREIPYQYVMMNWIQKSEDNLEALLYSRGIVETNPGKMGSSMGIDGSKRAIKSLRAVTIQSGKIDMPESKEKIHLELSDNLEAFDSSGRIVATILDLPSDKKVTFQDVSFQHPDLAVLRDEKTAITKGYEALIKRLGTGDNDIPSLIAKKDYLSLYNLPEVKLMAPLIRPNRKGVYSRVARKLVSTQVTTGHYSLHELIKVLPFTYFAPKQGMFEGRFFFSNDSFVEPGVNNNVLSWSKADSSKIYCHGIAIRVPLVVGDEHMDTSLALLEGFSVCENDPRAPMVTGQDLIDVGFGQKVRLFVGQGSVRTFKRTASQRAASSDVNKNVKKIKMSN.

The protein belongs to the influenza viruses PB2 family. Influenza RNA polymerase is composed of three subunits: PB1, PB2 and PA. Interacts (via N-terminus) with PB1 (via C-terminus). Interacts with nucleoprotein NP (via N-terminus).

Its subcellular location is the virion. The protein localises to the host nucleus. In terms of biological role, plays an essential role in transcription initiation and cap-stealing mechanism, in which cellular capped pre-mRNAs are used to generate primers for viral transcription. Recognizes and binds a wide range of cap structures of target pre-RNAs which are subsequently cleaved after 10-13 nucleotides by the viral protein PA. Plays a role in the initiation of the viral genome replication and modulates the activity of the ribonucleoprotein (RNP) complex. The chain is Polymerase basic protein 2 from Influenza C virus (strain C/Berlin/1/1985).